Reading from the N-terminus, the 2602-residue chain is Non-reducing polyketide synthase SAT8 (2602 aa).

Cysteine 130 acts as the Nucleophile; for transacylase activity in catalysis. Histidine 249 functions as the Proton donor/acceptor; for transacylase activity in the catalytic mechanism. The tract at residues 379 to 398 (MLENSTSPPSPAATSSNSHC) is disordered. Positions 382 to 396 (NSTSPPSPAATSSNS) are enriched in low complexity. The 419-residue stretch at 404 to 822 (PRDIAIVGMS…GSNAAMVVTQ (419 aa)) folds into the Ketosynthase family 3 (KS3) domain. Residues cysteine 571, histidine 706, and histidine 745 each act as for beta-ketoacyl synthase activity in the active site. The interval 926–1216 (FGGQMSTFVG…AMARRSLDSN (291 aa)) is malonyl-CoA:ACP transacylase (MAT). Residues 1298 to 1442 (GPLFGLLTFV…GKLDLLSSSE (145 aa)) are N-terminal hotdog fold. Residues 1298-1618 (GPLFGLLTFV…YTRIPRHSMT (321 aa)) form the PKS/mFAS DH domain. A product template (PT) domain region spans residues 1331-1616 (LVIPHIIART…IAYTRIPRHS (286 aa)). Histidine 1335 (proton acceptor; for dehydratase activity) is an active-site residue. A C-terminal hotdog fold region spans residues 1467–1618 (GDVSGLQGRS…YTRIPRHSMT (152 aa)). Aspartate 1524 functions as the Proton donor; for dehydratase activity in the catalytic mechanism. The 76-residue stretch at 1658–1733 (DTLKQTVGQI…AFVRYISKVV (76 aa)) folds into the Carrier domain. Position 1692 is an O-(pantetheine 4'-phosphoryl)serine (serine 1692). The tract at residues 1737-1772 (DDLGTPSHSDNDSHVTGTTATPNSSSASSDTHHGNS) is disordered. Residues 1752 to 1765 (TGTTATPNSSSASS) are compositionally biased toward low complexity. Positions 1979–2150 (VEKVKDDFQG…GYGHVDWTDG (172 aa)) are methyltransferase domain. Residues 2229–2530 (IVVVTGATGS…IPLGEWVRKV (302 aa)) form an NADPH-binding domain region.

It depends on pantetheine 4'-phosphate as a cofactor.

The protein operates within mycotoxin biosynthesis. Non-reducing polyketide synthase; part of the satratoxin SC1 cluster involved in the biosynthesis of satratoxins, trichothecene mycotoxins that are associated with human food poisonings. Satratoxins are suggested to be made by products of multiple gene clusters (SC1, SC2 and SC3) that encode 21 proteins in all, including polyketide synthases, acetyltransferases, and other enzymes expected to modify the trichothecene skeleton. SC1 encodes 10 proteins, SAT1 to SAT10. The largest are SAT8, which encodes a putative polyketide synthase (PKS) with a conventional non-reducing architecture, and SAT10, a putative protein containing four ankyrin repeats and thus may be involved in protein scaffolding. The putative short-chain reductase SAT3 may assist the PKS in some capacity. SAT6 contains a secretory lipase domain and acts probably as a trichothecene esterase. SAT5 encodes a putative acetyltransferase, and so, with SAT6, may affect endogenous protection from toxicity. The probable transcription factor SAT9 may regulate the expression of the SC1 cluster. SC2 encodes proteins SAT11 to SAT16, the largest of which encodes the putative reducing PKS SAT13. SAT11 is a cytochrome P450 monooxygenase, while SAT14 and SAT16 are probable acetyltransferases. The SC2 cluster may be regulated by the transcription factor SAT15. SC3 is a small cluster that encodes 5 proteins, SAT17 to SAT21. SAT21 is a putative MFS-type transporter which may have a role in exporting secondary metabolites. The four other proteins putatively encoded in SC3 include the taurine hydroxylase-like protein SAT17, the O-methyltransferase SAT18, the acetyltransferase SAT19, and the Cys6-type zinc finger SAT20, the latter being probably involved in regulation of SC3 expression. The chain is Non-reducing polyketide synthase SAT8 from Stachybotrys chartarum (strain CBS 109288 / IBT 7711) (Toxic black mold).